The primary structure comprises 396 residues: Bifunctional enzyme Fae/Hps (396 aa).

Positions 1 to 161 are formaldehyde-activating enzyme; sequence MYQIGEALIG…YEKDRGVHAI (161 aa). H17 (proton donor) is an active-site residue. Substrate-binding residues include D19, L48, K66, T68, and Q83. The interval 162–396 is 3-hexulose-6-phosphate synthase; it reads MGYKITRLWD…IDQYRIMTDF (235 aa).

The protein in the N-terminal section; belongs to the formaldehyde-activating enzyme family. It in the C-terminal section; belongs to the HPS/KGPDC family. HPS subfamily.

It carries out the reaction 5,6,7,8-tetrahydromethanopterin + formaldehyde = 5,10-methylenetetrahydromethanopterin + H2O. The enzyme catalyses D-ribulose 5-phosphate + formaldehyde = D-arabino-hex-3-ulose 6-phosphate. It participates in carbohydrate biosynthesis; D-ribose 5-phosphate biosynthesis. Functionally, catalyzes the condensation of formaldehyde with tetrahydromethanopterin (H(4)MPT) to 5,10-methylenetetrahydromethanopterin. Catalyzes the reversible formation of ribulose-5-phosphate and formaldehyde from 3-hexulose-6-phosphate. The chain is Bifunctional enzyme Fae/Hps from Methanocella arvoryzae (strain DSM 22066 / NBRC 105507 / MRE50).